The primary structure comprises 558 residues: Rhamnogalacturonase B (558 aa).

A signal peptide spans 1-21 (MLLDKLSVLSFLGLAPIFAAA). Cysteine 42 and cysteine 68 are oxidised to a cystine. The N-linked (GlcNAc...) asparagine glycan is linked to asparagine 145. Aspartate 219 serves as the catalytic Proton donor. A disulfide bridge connects residues cysteine 221 and cysteine 238. 2 N-linked (GlcNAc...) asparagine glycosylation sites follow: asparagine 239 and asparagine 254. Histidine 294 is a catalytic residue. Asparagine 321 carries an N-linked (GlcNAc...) asparagine glycan. Disulfide bonds link cysteine 344/cysteine 350 and cysteine 372/cysteine 381. Residues 503-526 (VGAQEGSTTSAPSFAAPSGAGNSP) show a composition bias toward low complexity. The tract at residues 503-558 (VGAQEGSTTSAPSFAAPSGAGNSPQGPTGASGFGEKGQQGEQGEQGEQGEQGVCYV) is disordered.

Belongs to the glycosyl hydrolase 28 family.

The protein localises to the secreted. It carries out the reaction Endohydrolysis of alpha-D-GalA-(1-&gt;2)-alpha-L-Rha glycosidic bond in the rhamnogalacturonan I backbone with initial inversion of anomeric configuration releasing oligosaccharides with beta-D-GalA at the reducing end.. Its function is as follows. Pectinolytic enzymes consist of four classes of enzymes: pectine lyase, polygalacturonase, pectin methylesterase and rhamnogalacturonase. Hydrolyzes alpha-D-galacturonopyranosyl-(1,2)-alpha-L-rhamnopyranosyl linkages in the backbone of the hairy regions of pectins. This Aspergillus niger protein is Rhamnogalacturonase B (rhgB).